A 654-amino-acid chain; its full sequence is Acetyl-coenzyme A synthetase (654 aa).

Residues 190-193 (RGGK) and T313 each bind CoA. Residues 389-391 (GEP), 413-418 (DTWWQT), D504, and R519 contribute to the ATP site. S527 provides a ligand contact to CoA. An ATP-binding site is contributed by R530. 2 residues coordinate Mg(2+): V541 and V546. At K613 the chain carries N6-acetyllysine.

Belongs to the ATP-dependent AMP-binding enzyme family. It depends on Mg(2+) as a cofactor. Post-translationally, acetylated. Deacetylation by the SIR2-homolog deacetylase activates the enzyme.

It catalyses the reaction acetate + ATP + CoA = acetyl-CoA + AMP + diphosphate. Functionally, catalyzes the conversion of acetate into acetyl-CoA (AcCoA), an essential intermediate at the junction of anabolic and catabolic pathways. AcsA undergoes a two-step reaction. In the first half reaction, AcsA combines acetate with ATP to form acetyl-adenylate (AcAMP) intermediate. In the second half reaction, it can then transfer the acetyl group from AcAMP to the sulfhydryl group of CoA, forming the product AcCoA. The sequence is that of Acetyl-coenzyme A synthetase from Leptospira borgpetersenii serovar Hardjo-bovis (strain JB197).